Reading from the N-terminus, the 793-residue chain is Probable phosphoketolase 2 (793 aa).

Belongs to the XFP family. It depends on thiamine diphosphate as a cofactor.

This Nostoc sp. (strain PCC 7120 / SAG 25.82 / UTEX 2576) protein is Probable phosphoketolase 2.